The primary structure comprises 63 residues: Hypoxia-inducible lipid droplet-associated protein (63 aa).

A required for targeting to lipid droplets region spans residues 1–37 (MKHVLNLYLLGVVLTLLSIFVRVMESLEGLLESPSPG). Residues 7–23 (LYLLGVVLTLLSIFVRV) traverse the membrane as a helical segment. Positions 31 to 63 (LESPSPGTSWTTRSQLANTEPTKGLPDHPSRSM) are disordered. The span at 35 to 51 (SPGTSWTTRSQLANTEP) shows a compositional bias: polar residues. Ser44 is subject to Phosphoserine.

As to expression, highly expressed in renal cell carcinoma cells but barely detectable in adjacent normal kidney tissue. Detected in some cervical and endometrial cancers. Expression also detected in fetal kidney with little or no expression observed in normal adult heart, liver, lung, pancreas, prostate or spinal cord (at protein level).

It localises to the lipid droplet. Its subcellular location is the secreted. The protein resides in the membrane. Increases intracellular lipid accumulation. Stimulates expression of cytokines including IL6, MIF and VEGFA. Enhances cell growth and proliferation. The sequence is that of Hypoxia-inducible lipid droplet-associated protein (HILPDA) from Homo sapiens (Human).